A 196-amino-acid polypeptide reads, in one-letter code: dCTP deaminase, dUMP-forming (196 aa).

DCTP contacts are provided by residues 101–106 (KSSLGR), aspartate 119, 127–129 (TLE), glutamine 148, tyrosine 162, and glutamine 174. The active-site Proton donor/acceptor is the glutamate 129.

The protein belongs to the dCTP deaminase family. Homotrimer.

The enzyme catalyses dCTP + 2 H2O = dUMP + NH4(+) + diphosphate. Its pathway is pyrimidine metabolism; dUMP biosynthesis; dUMP from dCTP: step 1/1. Bifunctional enzyme that catalyzes both the deamination of dCTP to dUTP and the hydrolysis of dUTP to dUMP without releasing the toxic dUTP intermediate. This chain is dCTP deaminase, dUMP-forming, found in Thermobifida fusca (strain YX).